The following is a 426-amino-acid chain: Histidine--tRNA ligase (426 aa).

It belongs to the class-II aminoacyl-tRNA synthetase family. As to quaternary structure, homodimer.

It is found in the cytoplasm. The catalysed reaction is tRNA(His) + L-histidine + ATP = L-histidyl-tRNA(His) + AMP + diphosphate + H(+). This Streptococcus agalactiae serotype Ia (strain ATCC 27591 / A909 / CDC SS700) protein is Histidine--tRNA ligase.